We begin with the raw amino-acid sequence, 968 residues long: Isoleucine--tRNA ligase (968 aa).

Residues 68–78 carry the 'HIGH' region motif; sequence PYANGALHMGH. Glu582 provides a ligand contact to L-isoleucyl-5'-AMP. The short motif at 623-627 is the 'KMSKS' region element; it reads KMSKS. Lys626 contacts ATP. Residues Cys936, Cys939, Cys956, and Cys959 each coordinate Zn(2+).

Belongs to the class-I aminoacyl-tRNA synthetase family. IleS type 1 subfamily. In terms of assembly, monomer. The cofactor is Zn(2+).

It is found in the cytoplasm. It catalyses the reaction tRNA(Ile) + L-isoleucine + ATP = L-isoleucyl-tRNA(Ile) + AMP + diphosphate. Catalyzes the attachment of isoleucine to tRNA(Ile). As IleRS can inadvertently accommodate and process structurally similar amino acids such as valine, to avoid such errors it has two additional distinct tRNA(Ile)-dependent editing activities. One activity is designated as 'pretransfer' editing and involves the hydrolysis of activated Val-AMP. The other activity is designated 'posttransfer' editing and involves deacylation of mischarged Val-tRNA(Ile). This is Isoleucine--tRNA ligase from Prochlorococcus marinus (strain MIT 9301).